A 321-amino-acid chain; its full sequence is Tetraacyldisaccharide 4'-kinase (321 aa).

Ser54–Thr61 lines the ATP pocket.

It belongs to the LpxK family.

It catalyses the reaction a lipid A disaccharide + ATP = a lipid IVA + ADP + H(+). It participates in glycolipid biosynthesis; lipid IV(A) biosynthesis; lipid IV(A) from (3R)-3-hydroxytetradecanoyl-[acyl-carrier-protein] and UDP-N-acetyl-alpha-D-glucosamine: step 6/6. Its function is as follows. Transfers the gamma-phosphate of ATP to the 4'-position of a tetraacyldisaccharide 1-phosphate intermediate (termed DS-1-P) to form tetraacyldisaccharide 1,4'-bis-phosphate (lipid IVA). The chain is Tetraacyldisaccharide 4'-kinase from Rickettsia africae (strain ESF-5).